Here is a 222-residue protein sequence, read N- to C-terminus: Apoptosis regulator OPG045 (222 aa).

This sequence belongs to the orthopoxvirus OPG045 family. Homodimer. Interacts with host pro-apoptotic protein BCL2L11 (via BH3 domain). Interacts with host NLRP1. Interacts with host BAK.

Its subcellular location is the host mitochondrion outer membrane. It localises to the host cytoplasm. Plays a role in evading host innate immune response by inhibiting host inflammasome activation. Interacts with and inhibits NLR-mediated interleukin-1 beta/IL1B production in infected cells. At the host mitochondria outer membrane, interacts with the BH3 domain of host BAK and prevents BAK from binding active BAX. In turn, host apoptosis is inhibited. The polypeptide is Apoptosis regulator OPG045 (OPG045) (Homo sapiens (Human)).